A 424-amino-acid chain; its full sequence is Mitogen-activated protein kinase mpkA (424 aa).

The 292-residue stretch at 23-314 (YNVTKELGQG…VEEALEHPYL (292 aa)) folds into the Protein kinase domain. Residues 29 to 37 (LGQGAYGIV) and K52 each bind ATP. The disordered stretch occupies residues 375-424 (QQIAQQTNVPIPDHQQGGWKQEEPKPQEVHAAGGHVNDLESSLQRGMDVQ).

The protein belongs to the protein kinase superfamily. Ser/Thr protein kinase family. As to quaternary structure, interacts with flbB, flbC, brlA, and rasB. Interacts with fmqA and fmqC. Interacts with hsp90. Requires Mg(2+) as cofactor. Phosphorylated by the upstreamm MAPKK mkk2. Phosphorylation is induced during asexual development. Phosphorylation is regulated by rlmA.

It carries out the reaction L-seryl-[protein] + ATP = O-phospho-L-seryl-[protein] + ADP + H(+). It catalyses the reaction L-threonyl-[protein] + ATP = O-phospho-L-threonyl-[protein] + ADP + H(+). Activated by threonine and tyrosine phosphorylation by the upstreamm MAPKK mkk2. Its function is as follows. Mitogen-activated protein kinase; part of cell wall integrity (CWI) signaling pathway composed of pkcA, the bck1-mkk2-mpka MAPK cascade and the downstream rlmA transcription regulator. The CWI signaling pathway regulates cell wall integrity and pyomelanin formation. CWI also controls oxidative stress response, gliotoxin production, iron adaptation and asexual development. Finally, CWI is constitutively required for A.fumigatus to cope with the temperature increase found in the mammalian lung environment, during infection. MpkA positively modulates the expression of fumiquinazoline cluster during conidiogenesis and directly phosphorylates fmqC, and perhaps also fmqA. In Aspergillus fumigatus (strain ATCC MYA-4609 / CBS 101355 / FGSC A1100 / Af293) (Neosartorya fumigata), this protein is Mitogen-activated protein kinase mpkA.